Consider the following 159-residue polypeptide: Cyclic pyranopterin monophosphate synthase (159 aa).

Residues 75–77 (LCH) and 113–114 (ME) each bind substrate. Residue Asp-128 is part of the active site.

This sequence belongs to the MoaC family. As to quaternary structure, homohexamer; trimer of dimers.

The catalysed reaction is (8S)-3',8-cyclo-7,8-dihydroguanosine 5'-triphosphate = cyclic pyranopterin phosphate + diphosphate. It participates in cofactor biosynthesis; molybdopterin biosynthesis. Catalyzes the conversion of (8S)-3',8-cyclo-7,8-dihydroguanosine 5'-triphosphate to cyclic pyranopterin monophosphate (cPMP). This is Cyclic pyranopterin monophosphate synthase from Yersinia pseudotuberculosis serotype O:1b (strain IP 31758).